Here is a 182-residue protein sequence, read N- to C-terminus: CASP-like protein 2B1 (182 aa).

The Cytoplasmic segment spans residues 1–12 (MKLIDRRMRLTE). The chain crosses the membrane as a helical span at residues 13–31 (LLLRCSISVFALLALILVV). The Extracellular portion of the chain corresponds to 32–52 (TDTEVKLIFTIKKTAKYTDMK). A helical transmembrane segment spans residues 53–73 (AVVFLVVANGIAAVYSLLQSV). Residues 74–89 (RCVVGTMKGKVLFSKP) are Cytoplasmic-facing. The helical transmembrane segment at 90 to 110 (LAWAFFSGDQAMAYLNVAAIA) threads the bilayer. The Extracellular segment spans residues 111 to 141 (ATAESGVIAREGEEDLQWMRVCTMYGKFCNQ). The helical transmembrane segment at 142 to 162 (MAIGVSSALLASIAMVFVSCI) threads the bilayer. The Cytoplasmic segment spans residues 163–182 (SAFSLFRLYGATKDRRTTPW).

Belongs to the Casparian strip membrane proteins (CASP) family. Homodimer and heterodimers.

It localises to the cell membrane. The polypeptide is CASP-like protein 2B1 (Arabidopsis thaliana (Mouse-ear cress)).